A 326-amino-acid chain; its full sequence is Phosphate acyltransferase (326 aa).

This sequence belongs to the PlsX family. Homodimer. Probably interacts with PlsY.

The protein localises to the cytoplasm. The enzyme catalyses a fatty acyl-[ACP] + phosphate = an acyl phosphate + holo-[ACP]. It participates in lipid metabolism; phospholipid metabolism. Catalyzes the reversible formation of acyl-phosphate (acyl-PO(4)) from acyl-[acyl-carrier-protein] (acyl-ACP). This enzyme utilizes acyl-ACP as fatty acyl donor, but not acyl-CoA. In Petrotoga mobilis (strain DSM 10674 / SJ95), this protein is Phosphate acyltransferase.